A 110-amino-acid polypeptide reads, in one-letter code: U-scoloptoxin(16)-Er6a (110 aa).

The signal sequence occupies residues 1-26; it reads MTSTRKLSVSCLIVFMVSSLIAVSSG.

This sequence belongs to the scoloptoxin-16 family. Post-translationally, contains 4 disulfide bonds. As to expression, expressed by the venom gland.

Its subcellular location is the secreted. This Ethmostigmus rubripes (Giant centipede) protein is U-scoloptoxin(16)-Er6a.